A 189-amino-acid polypeptide reads, in one-letter code: Apolipoprotein D (189 aa).

The first 20 residues, 1–20 (MVMLLLLLSALAGLFGAAEG), serve as a signal peptide directing secretion. Q21 is modified (pyrrolidone carboxylic acid). 2 cysteine pairs are disulfide-bonded: C28–C134 and C61–C185. N65 and N98 each carry an N-linked (GlcNAc...) asparagine glycan.

The protein belongs to the calycin superfamily. Lipocalin family. Homodimer.

It localises to the secreted. Its function is as follows. APOD occurs in the macromolecular complex with lecithin-cholesterol acyltransferase. It is probably involved in the transport and binding of bilin. Appears to be able to transport a variety of ligands in a number of different contexts. This Macaca fascicularis (Crab-eating macaque) protein is Apolipoprotein D (APOD).